Reading from the N-terminus, the 864-residue chain is N-alpha-acetyltransferase 16, NatA auxiliary subunit (864 aa).

TPR repeat units follow at residues 46–79, 80–113, 148–184, 224–257, 374–407, 409–441, and 485–518; these read GETLAMKGLTLNCLGKKEEAYEFVRKGLRNDVKS, HVCWHVYGLLQRSDKKYDEAIKCYRNALKLDKDN, RASWIGYAIAYHLLKDYDMALKLLEEFRQTQQVPPNK, LLVEEIKGEILLKLGRLKEASEVFKNLIDRNAEN, LWVQYFLAQHFDKLGQYSLALDYINAAIASTPTL, ELFYMKAKIYKHIGNLKEAAKWMDEAQSLDTAD, and MWFQTECISAYQRLGRYGDALKKCHEVERHFFEI. The segment at 603 to 638 is disordered; sequence QKKAKLEEERKHAERERQQKNQKKKRDEEEEEASGL. The span at 606–621 shows a compositional bias: basic and acidic residues; that stretch reads AKLEEERKHAERERQQ.

In terms of assembly, component of the N-terminal acetyltransferase A (NatA) complex composed of NAA10 and NAA16.

Functionally, auxillary subunit of the N-terminal acetyltransferase A (NatA) complex which displays alpha (N-terminal) acetyltransferase activity. The sequence is that of N-alpha-acetyltransferase 16, NatA auxiliary subunit (NAA16) from Homo sapiens (Human).